Consider the following 141-residue polypeptide: MTKTAKVNDIVRDWVVLDAKDKVFGRLITEIAVLLRGKHRPFYTPNVDCGDFVVVINANKVKFSGMKLEDKEYFTHSGYFGSTKSKTLQEMLEKTPEKLYHLAVRGMLPKTKLGKAMIKKLKVYRDDKHPHTAQTSKKDAK.

Belongs to the universal ribosomal protein uL13 family. In terms of assembly, part of the 50S ribosomal subunit.

Functionally, this protein is one of the early assembly proteins of the 50S ribosomal subunit, although it is not seen to bind rRNA by itself. It is important during the early stages of 50S assembly. The sequence is that of Large ribosomal subunit protein uL13 from Helicobacter pylori (strain G27).